The following is a 457-amino-acid chain: Glycine receptor subunit alpha-1 (457 aa).

A signal peptide spans 1–28 (MYSFNTLRFYLWETIVFFSLAASKEAEA). The Extracellular portion of the chain corresponds to 29–250 (ARSAPKPMSP…RFHLERQMGY (222 aa)). N-linked (GlcNAc...) asparagine glycosylation occurs at Asn66. Residues Arg93 and Ser157 each coordinate glycine. Cys166 and Cys180 are joined by a disulfide. Residues Glu220 and Asp222 each contribute to the Zn(2+) site. Cys226 and Cys237 form a disulfide bridge. 230–235 (YNTGKF) contacts strychnine. Thr232 provides a ligand contact to glycine. Zn(2+) is bound at residue His243. A helical membrane pass occupies residues 251–272 (YLIQMYIPSLLIVILSWISFWI). Topologically, residues 273–277 (NMDAA) are cytoplasmic. The chain crosses the membrane as a helical span at residues 278-298 (PARVGLGITTVLTMTTQSSGS). Residues 299 to 309 (RASLPKVSYVK) lie on the Extracellular side of the membrane. A helical transmembrane segment spans residues 310–330 (AIDIWMAVCLLFVFSALLEYA). The Cytoplasmic segment spans residues 331-425 (AVNFVSRQHK…FIQRAKKIDK (95 aa)). The segment at 391-410 (KGANNNNTTNPPPAPSKSPE) is disordered. Residues 426–446 (ISRIGFPMAFLIFNMFYWIIY) form a helical membrane-spanning segment. Topologically, residues 447–457 (KIVRREDVHNK) are extracellular.

It belongs to the ligand-gated ion channel (TC 1.A.9) family. Glycine receptor (TC 1.A.9.3) subfamily. GLRA1 sub-subfamily. As to quaternary structure, interacts with GLRB to form heteropentameric channels; this is probably the predominant form in vivo. Heteropentamer composed of four GLRA1 subunits and one GLRB subunit. Heteropentamer composed of two GLRA1 and three GLRB. Heteropentamer composed of three GLRA1 and two GLRB. Homopentamer (in vitro). Both homopentamers and heteropentamers form functional ion channels, but their characteristics are subtly different. In terms of tissue distribution, detected in spinal cord neurons. Detected in brain stem neurons. Detected at lower levels in hippocampus and cerebellum. Detected in the inner plexiform layer of the retina (at protein level).

It is found in the postsynaptic cell membrane. The protein resides in the synapse. Its subcellular location is the perikaryon. The protein localises to the cell projection. It localises to the dendrite. It is found in the cell membrane. It carries out the reaction chloride(in) = chloride(out). Channel opening is triggered by extracellular glycine. Channel characteristics depend on the subunit composition; heteropentameric channels are activated by lower glycine levels and display faster desensitization. Channel opening is also triggered by taurine and beta-alanine. Inhibited by strychnine. Strychnine binding locks the channel in a closed conformation and prevents channel opening in response to extracellular glycine. Inhibited by picrotoxin. Channel activity is enhanced by 5 uM Zn(2+) and inhibited by 100 uM Zn(2+). Subunit of heteromeric glycine-gated chloride channels. Plays an important role in the down-regulation of neuronal excitability. Contributes to the generation of inhibitory postsynaptic currents. Channel activity is potentiated by ethanol. Potentiation of channel activity by intoxicating levels of ethanol contribute to the sedative effects of ethanol. This is Glycine receptor subunit alpha-1 (Glra1) from Mus musculus (Mouse).